The primary structure comprises 100 residues: Large ribosomal subunit protein uL23 (100 aa).

It belongs to the universal ribosomal protein uL23 family. In terms of assembly, part of the 50S ribosomal subunit. Contacts protein L29, and trigger factor when it is bound to the ribosome.

Its function is as follows. One of the early assembly proteins it binds 23S rRNA. One of the proteins that surrounds the polypeptide exit tunnel on the outside of the ribosome. Forms the main docking site for trigger factor binding to the ribosome. This chain is Large ribosomal subunit protein uL23, found in Rippkaea orientalis (strain PCC 8801 / RF-1) (Cyanothece sp. (strain PCC 8801)).